Consider the following 100-residue polypeptide: Movement protein TGBp3 (100 aa).

Over 1–41 (MQTAPREYSTSGPTAVLAPTTNTQHYAPYSLYRFLSSHKLD) the chain is Lumenal. Residues 42-59 (LLLGIALLVFLYVITAAP) traverse the membrane as a helical segment. Residues 60–100 (KEVCQVVITGESVVIRNCQQPDRILANLNLSPWNGVKFPLL) lie on the Cytoplasmic side of the membrane.

The protein belongs to the Tymovirales TGBp3 protein family.

The protein localises to the host endoplasmic reticulum membrane. In terms of biological role, plays a role in viral cell-to-cell propagation, by facilitating genome transport to neighboring plant cells through plasmosdesmata. May induce the formation of granular vesicles derived from the Endoplasmic reticulum, which align on actin filaments. The polypeptide is Movement protein TGBp3 (Narcissus mosaic virus (NMV)).